The following is a 184-amino-acid chain: Dual specificity protein phosphatase 22 (184 aa).

Glycine 2 carries N-myristoyl glycine lipidation. In terms of domain architecture, Tyrosine-protein phosphatase spans glycine 4–histidine 144. Catalysis depends on cysteine 88, which acts as the Phosphocysteine intermediate. A protein is bound by residues leucine 89, alanine 90, valine 92, serine 93, and arginine 94.

The protein belongs to the protein-tyrosine phosphatase family. Non-receptor class dual specificity subfamily. Monomer. Interacts with LCK; the interaction is direct. Interacts with UBR2; the interaction is direct. Myristoylation regulates subcellular location, and is necessary for activation of JNK.

It is found in the cytoplasm. It carries out the reaction O-phospho-L-tyrosyl-[protein] + H2O = L-tyrosyl-[protein] + phosphate. It catalyses the reaction O-phospho-L-seryl-[protein] + H2O = L-seryl-[protein] + phosphate. The enzyme catalyses O-phospho-L-threonyl-[protein] + H2O = L-threonyl-[protein] + phosphate. Its function is as follows. Dual specificity phosphatase; can dephosphorylate both phosphotyrosine and phosphoserine or phosphothreonine residues. Activates the JNK signaling pathway. Inhibits T-cell receptor signaling and T-cell mediated immune responses, acting, at least in part, by inducing degradation of E3 ubiquitin ligase UBR2. Dephosphorylates and thereby induces 'Lys-48'-linked ubiquitination of UBR2, leading to proteasomal degradation of UBR2. Dephosphorylates and thereby inactivates tyrosine kinase LCK. Inhibits UBR2-mediated 'Lys-63'-linked ubiquitination of LCK. May play a role in B-cell receptor (BCR) signaling and B-cell function. The protein is Dual specificity protein phosphatase 22 (Dusp22) of Mus musculus (Mouse).